A 514-amino-acid chain; its full sequence is Endogenous retrovirus group PABLB member 1 Env polyprotein (514 aa).

N-linked (GlcNAc...) asparagine glycosylation is present at Asn58. A surface protein region spans residues Ser60–Gln316. The CXXC motif lies at Cys82–Cys85. 6 N-linked (GlcNAc...) asparagine glycosylation sites follow: Asn133, Asn140, Asn155, Asn218, Asn226, and Asn267. A transmembrane protein region spans residues Gly317–Pro514. The segment at Leu328–Leu348 is fusion peptide. 2 N-linked (GlcNAc...) asparagine glycosylation sites follow: Asn350 and Asn357. Residues Leu378–Thr394 carry the CKS-17 motif. Cysteines 395 and 402 form a disulfide. A CX6CC motif is present at residues Cys395–Cys403. N-linked (GlcNAc...) asparagine glycosylation is found at Asn408 and Asn412. A helical membrane pass occupies residues Ile452–Phe472.

Belongs to the gamma type-C retroviral envelope protein family. HERV class-I R(b) env subfamily. The CXXC motif is highly conserved across a broad range of retroviral envelope proteins. It is thought to participate in the formation of a labile disulfide bond possibly with the CX6CC motif present in the transmembrane domain. In terms of tissue distribution, low expression in placenta and testis.

The protein localises to the cell membrane. Retroviral envelope proteins mediate receptor recognition and membrane fusion during early infection. Endogenous envelope proteins may have kept, lost or modified their original function during evolution. This endogenous envelope protein has lost its original fusogenic properties. This Homo sapiens (Human) protein is Endogenous retrovirus group PABLB member 1 Env polyprotein (ERVPABLB-1).